The following is a 1077-amino-acid chain: Adenylate cyclase type 4 (1077 aa).

Residues 1–28 are Cytoplasmic-facing; that stretch reads MARLFSPRPPPSEDLFYETYYSLSQQYP. 6 consecutive transmembrane segments (helical) span residues 29–50, 61–80, 94–117, 120–138, 141–162, and 170–190; these read LLLLLLGIVLCALAALLAVAWA, FLTTVLCALGGFSLLLGLAS, GLVWVALLALGHAFLFTGGVVSAW, VSYFLFVIFTAYAMLPLGM, AAVAGLASSLSHLLVLGLYLGP, and LLPQLAANAVLFLCGNVAGVY. The Cytoplasmic portion of the chain corresponds to 191–585; sequence HKALMERALR…YRLSAIPAFK (395 aa). Residues Asp-278, Ile-279, and Asp-322 each coordinate Mg(2+). Residues 278–283, 320–322, and Arg-366 each bind ATP; these read DIVGFT and LGD. Residue Ser-520 is modified to Phosphoserine. Thr-536 is subject to Phosphothreonine. The next 3 membrane-spanning stretches (helical) occupy residues 586–607, 611–633, and 664–687; these read YYEACTFLVFLSNFIIQMLVTN, ALAITYSITFLLFLLILFVCFSE, and IALGTATILLVFAMAITSLFFFPT. Residues 688–714 are Extracellular-facing; it reads SSDCPFQAPNVSSMISNLSWELPGSLP. 2 N-linked (GlcNAc...) asparagine glycosylation sites follow: Asn-697 and Asn-704. Helical transmembrane passes span 715 to 736, 744 to 764, and 791 to 807; these read LISVPYSMHCCTLGFLSCSLFL, LLLLLLWLAASCSLFLHSHAW, and MGAISFFIFFFTLLVLA. Topologically, residues 808 to 1077 are cytoplasmic; that stretch reads RQNEYYCRLD…RTGPPSATLG (270 aa). ATP contacts are provided by residues Lys-925, 1005–1007, 1012–1016, and Lys-1052; these read DIW and NVASR.

This sequence belongs to the adenylyl cyclase class-4/guanylyl cyclase family. The cofactor is Mg(2+). Mn(2+) is required as a cofactor. As to expression, detected in the zona glomerulosa and the zona fasciculata in the adrenal gland (at protein level).

It is found in the cell membrane. The protein resides in the cytoplasm. It carries out the reaction ATP = 3',5'-cyclic AMP + diphosphate. With respect to regulation, activated by forskolin. Insensitive to calcium/calmodulin. Stimulated by GNAS and by the G-protein beta and gamma subunit complex. In terms of biological role, catalyzes the formation of the signaling molecule cAMP in response to G-protein signaling. In Homo sapiens (Human), this protein is Adenylate cyclase type 4 (ADCY4).